Here is a 392-residue protein sequence, read N- to C-terminus: Glycerophosphodiester phosphodiesterase GDPD5 (392 aa).

The N-terminal stretch at 1–21 (MILTRCLPLIWLSLLTVCAAG) is a signal peptide. The region spanning 44-362 (PYNIAHRGSN…DFTGSLHNFQ (319 aa)) is the GP-PDE domain. 4 N-linked (GlcNAc...) asparagine glycosylation sites follow: Asn-120, Asn-239, Asn-260, and Asn-329.

The protein belongs to the glycerophosphoryl diester phosphodiesterase family. In terms of tissue distribution, expressed in roots, rosette and cauline leaves, stems, flowers and siliques.

The protein localises to the secreted. It is found in the cell wall. It localises to the vacuole. It catalyses the reaction a sn-glycero-3-phosphodiester + H2O = an alcohol + sn-glycerol 3-phosphate + H(+). The polypeptide is Glycerophosphodiester phosphodiesterase GDPD5 (Arabidopsis thaliana (Mouse-ear cress)).